The following is a 146-amino-acid chain: Snaclec 1 (146 aa).

The first 23 residues, 1-23 (MGRFIFISFGLLVVFLSLSGTEA), serve as a signal peptide directing secretion. 3 disulfides stabilise this stretch: C25–C36, C53–C142, and C119–C134. The C-type lectin domain occupies 32-143 (YEGHCYRVFD…CRNYGHFVCK (112 aa)).

This sequence belongs to the snaclec family. Heterodimer; disulfide-linked. As to expression, expressed by the venom gland.

The protein resides in the secreted. In terms of biological role, interferes with one step of hemostasis (modulation of platelet aggregation, or coagulation cascade, for example). The polypeptide is Snaclec 1 (Bitis arietans (African puff adder)).